The following is a 901-amino-acid chain: Phosphatidylinositol 3-kinase catalytic subunit type 3 (901 aa).

One can recognise a C2 PI3K-type domain in the interval Leu21–Gln189. Positions Arg302–Arg527 constitute a PIK helical domain. A PI3K/PI4K catalytic domain is found at Ile607–Met886. The G-loop stretch occupies residues Phe613–Met619. Positions Gly755–Asn763 are catalytic loop. The interval His774–Thr795 is activation loop.

This sequence belongs to the PI3/PI4-kinase family. As to quaternary structure, interacts with bec-1. May interact with dyn-1. Requires Mn(2+) as cofactor. In terms of tissue distribution, ubiquitous.

The protein resides in the nucleus outer membrane. It localises to the cytoplasm. It is found in the cytoplasmic granule. The protein localises to the cell projection. Its subcellular location is the phagocytic cup. The catalysed reaction is a 1,2-diacyl-sn-glycero-3-phospho-(1D-myo-inositol) + ATP = a 1,2-diacyl-sn-glycero-3-phospho-(1D-myo-inositol-3-phosphate) + ADP + H(+). With respect to regulation, inhibited by wortmannin. Functionally, catalytic subunit of the PI3K complex that mediates formation of phosphatidylinositol 3-phosphate. Together with bec-1, mediates the production of phosphatidylinositol 3-phosphate on intracellular vesicles and thereby regulates membrane trafficking. Plays a role in endosome-to-Golgi retrograde transport of mig-14. Involved in clearance of apoptotic cell corpses by phagosomes. Phagosome maturation requires two sequential and non-overlapping pulses of phosphatidylinositol-3-phosphate (PI3P) on the vesicle surface which mediates recruitment of sortins snx-1 and lst-4 and small GTPases rab-5, rab-2 and rab-7, downstream of dynamin dyn-1. The first pulse is initiated by piki-1, then maintained by vps-34 which also produces the second pulse. Required for embryonic development. Together with bec-1, involved in L3/L4 larval molting stage probably by regulating cuticle shedding. Regulates the expansion of the nucleus outer membrane. Involved in the secretion and localization of lrp-1 at the apical surface of hyp7 syncytium. May regulate endocytosis in hypodermal cells. May play a role in the formation of gut granules (a lysosome-related organelle). Plays a role in germ stem cell proliferation during larval development. This Caenorhabditis elegans protein is Phosphatidylinositol 3-kinase catalytic subunit type 3.